We begin with the raw amino-acid sequence, 427 residues long: ATP-dependent RNA helicase DDX39A (427 aa).

Positions 1–19 (MAEQDVENDLLDYDEEEEP) are enriched in acidic residues. Positions 1–34 (MAEQDVENDLLDYDEEEEPQAPQESTPAPPKKDI) are disordered. A2 is modified (N-acetylalanine). K31 is covalently cross-linked (Glycyl lysine isopeptide (Lys-Gly) (interchain with G-Cter in SUMO2)). An N6-acetyllysine; alternate modification is found at K35. Residue K35 forms a Glycyl lysine isopeptide (Lys-Gly) (interchain with G-Cter in SUMO2); alternate linkage. S37 carries the post-translational modification Phosphoserine. A Q motif motif is present at residues 44–72 (SGFRDFLLKPELLRAIVDCGFEHPSEVQH). One can recognise a Helicase ATP-binding domain in the interval 75-248 (IPQAILGMDV…RKFMQDPMEV (174 aa)). 88 to 95 (AKSGMGKT) is an ATP binding site. Glycyl lysine isopeptide (Lys-Gly) (interchain with G-Cter in SUMO2) cross-links involve residues K154 and K162. T171 bears the Phosphothreonine mark. The DECD box motif lies at 195–198 (DECD). Residues K240 and K255 each participate in a glycyl lysine isopeptide (Lys-Gly) (interchain with G-Cter in SUMO2) cross-link. A Helicase C-terminal domain is found at 260–421 (GLQQYYVKLK…ELPEEIDIST (162 aa)). Phosphoserine is present on S426.

Belongs to the DEAD box helicase family. DECD subfamily. As to quaternary structure, binds ALYREF/THOC4 and DDX39B/BAT1. Interacts with the apo-AREX complex component SARNP. Interacts with MX1. Interacts with MCM3AP isoform GANP. Interacts with ECD. Interacts with PHAX; this interaction stimulates PHAX RNA binding activity. In terms of assembly, (Microbial infection) Interacts with human cytomegalovirus/HHV-5 protein UL69. In terms of processing, SUMOylated by RANBP2; SUMOylation modification affects its ability to bind RNA. As to expression, detected in testis, and at lower levels in brain, kidney, lung, thymus, spleen and salivary gland.

The protein localises to the nucleus. It is found in the cytoplasm. It catalyses the reaction ATP + H2O = ADP + phosphate + H(+). Its function is as follows. Helicase that plays an essential role in mRNA export and is involved in multiple steps in RNA metabolism including alternative splicing. Regulates nuclear mRNA export to the cytoplasm through association with ECD. Also involved in spliceosomal uridine-rich small nuclear RNA (U snRNA) export by stimulating the RNA binding of adapter PHAX. Plays a role in the negative regulation of type I IFN production by increasing the nuclear retention of antiviral transcripts and thus reducing their protein expression. Independently of the interferon pathway, plays an antiviral role against alphaviruses by binding to a 5' conserved sequence element in the viral genomic RNA. The sequence is that of ATP-dependent RNA helicase DDX39A (DDX39A) from Homo sapiens (Human).